A 683-amino-acid polypeptide reads, in one-letter code: DNA ligase (683 aa).

NAD(+) is bound by residues 36-40, 85-86, and glutamate 119; these read DAEYD and SL. Lysine 121 acts as the N6-AMP-lysine intermediate in catalysis. Residues arginine 142, glutamate 179, lysine 295, and lysine 319 each coordinate NAD(+). Residues cysteine 413, cysteine 416, cysteine 431, and cysteine 437 each contribute to the Zn(2+) site. The BRCT domain occupies 596–683; sequence TETLPLSGQT…EHQAHLGGEA (88 aa).

This sequence belongs to the NAD-dependent DNA ligase family. LigA subfamily. Mg(2+) serves as cofactor. The cofactor is Mn(2+).

The enzyme catalyses NAD(+) + (deoxyribonucleotide)n-3'-hydroxyl + 5'-phospho-(deoxyribonucleotide)m = (deoxyribonucleotide)n+m + AMP + beta-nicotinamide D-nucleotide.. Its function is as follows. DNA ligase that catalyzes the formation of phosphodiester linkages between 5'-phosphoryl and 3'-hydroxyl groups in double-stranded DNA using NAD as a coenzyme and as the energy source for the reaction. It is essential for DNA replication and repair of damaged DNA. The protein is DNA ligase of Hahella chejuensis (strain KCTC 2396).